A 421-amino-acid chain; its full sequence is uncharacterized protein (421 aa).

This is an uncharacterized protein from Escherichia coli (strain K12).